The primary structure comprises 92 residues: uncharacterized protein (92 aa).

This is an uncharacterized protein from Pasteurella multocida (strain Pm70).